The chain runs to 378 residues: Spermidine/putrescine import ATP-binding protein PotA (378 aa).

The ABC transporter domain maps to 18–248 (VQLAGIRKCF…PKNLFVAGFI (231 aa)). 50-57 (GPSGCGKT) serves as a coordination point for ATP.

The protein belongs to the ABC transporter superfamily. Spermidine/putrescine importer (TC 3.A.1.11.1) family. The complex is composed of two ATP-binding proteins (PotA), two transmembrane proteins (PotB and PotC) and a solute-binding protein (PotD).

Its subcellular location is the cell inner membrane. The enzyme catalyses ATP + H2O + polyamine-[polyamine-binding protein]Side 1 = ADP + phosphate + polyamineSide 2 + [polyamine-binding protein]Side 1.. In terms of biological role, part of the ABC transporter complex PotABCD involved in spermidine/putrescine import. Responsible for energy coupling to the transport system. This Escherichia coli O1:K1 / APEC protein is Spermidine/putrescine import ATP-binding protein PotA.